The chain runs to 190 residues: MRITIAGKIGSGKSTVSQEISKITGYSVYSSGTFFRESAKKMGMSIEDFNRYAETHPEADYATDGMQKDFMETHDNIIVEGRLAGWICKIYSISAFKVFLYATRYTRLVRFSNREGIEIDEAAKLLDEREISEKKRYLDLYGIDIDDLSIYDIVVNTEFMKPEEVAVLVLNRIDEMSRKEVYTPRILKGM.

ATP is bound at residue 7 to 15 (GKIGSGKST).

This sequence belongs to the cytidylate kinase family. Type 2 subfamily.

It localises to the cytoplasm. The enzyme catalyses CMP + ATP = CDP + ADP. It carries out the reaction dCMP + ATP = dCDP + ADP. This chain is Cytidylate kinase, found in Thermoplasma volcanium (strain ATCC 51530 / DSM 4299 / JCM 9571 / NBRC 15438 / GSS1).